A 130-amino-acid polypeptide reads, in one-letter code: MAASSSSFVPLVLLFLAIPVEPRPSMTRDEAQVLRALFGARLSSIISTPVNTDDIAELLPRRPGPPRSFGASPGALRGLTRGSEGGSRFLLDFLQQQSKTTRRGRSSMVGGRGCFGMKIDRIGSISGLGC.

The N-terminal stretch at 1–22 is a signal peptide; that stretch reads MAASSSSFVPLVLLFLAIPVEP. A propeptide spanning residues 23-103 is cleaved from the precursor; sequence RPSMTRDEAQ…LQQQSKTTRR (81 aa). Positions 57-77 are disordered; sequence ELLPRRPGPPRSFGASPGALR. Cys-114 and Cys-130 are joined by a disulfide.

The protein belongs to the natriuretic peptide family.

It is found in the secreted. In terms of biological role, exhibits natriuretic and vasodepressant activity. Has cGMP-stimulating activity. May help to regulate body fluid homeostasis in a variety of aquatic environments. The polypeptide is C-type natriuretic peptide 2 (Takifugu rubripes (Japanese pufferfish)).